The sequence spans 740 residues: Ribosomal protein S6 kinase alpha-3 (740 aa).

Positions 1–38 are disordered; it reads MPLAQLADPWQKMAVESPSDSAENGQQIMDEPMGEEEI. Over residues 18–27 the composition is skewed to polar residues; it reads PSDSAENGQQ. The 260-residue stretch at 68-327 folds into the Protein kinase 1 domain; that stretch reads FELLKVLGQG…VEEIKRHSFF (260 aa). Residues 74-82 and K100 contribute to the ATP site; that span reads LGQGSFGKV. Residue D193 is the Proton acceptor of the active site. S227 carries the post-translational modification Phosphoserine; by PDPK1. Residues 328–397 form the AGC-kinase C-terminal domain; that stretch reads STIDWNKLYR…VAITSDDESQ (70 aa). The residue at position 365 (T365) is a Phosphothreonine. S369 and S375 each carry phosphoserine. S386 carries the post-translational modification Phosphoserine; by autocatalysis and MAPKAPK2. A Phosphoserine modification is found at S415. The Protein kinase 2 domain maps to 422–679; the sequence is YEVKEDIGVG…AALVLRHPWI (258 aa). Residues 428-436 and K451 contribute to the ATP site; that span reads IGVGSYSVC. Y529 carries the post-translational modification Phosphotyrosine; by FGFR3. D539 functions as the Proton acceptor in the catalytic mechanism. Phosphoserine occurs at positions 556 and 715.

It belongs to the protein kinase superfamily. AGC Ser/Thr protein kinase family. S6 kinase subfamily. Forms a complex with either MAPK1/ERK2 or MAPK3/ERK1 in quiescent cells. Transiently dissociates following mitogenic stimulation. Interacts with NFATC4, ETV1/ER81 and FGFR1. The cofactor is Mg(2+). Activated by phosphorylation at Ser-227 by PDPK1. Autophosphorylated on Ser-386, as part of the activation process. May be phosphorylated at Thr-365 and Ser-369 by MAPK1/ERK2 and MAPK3/ERK1. Can also be activated via phosphorylation at Ser-386 by MAPKAPK2. Post-translationally, N-terminal myristoylation results in an activated kinase in the absence of added growth factors. Expressed in many tissues, highest levels in skeletal muscle.

The protein resides in the nucleus. It localises to the cytoplasm. The catalysed reaction is L-seryl-[protein] + ATP = O-phospho-L-seryl-[protein] + ADP + H(+). The enzyme catalyses L-threonyl-[protein] + ATP = O-phospho-L-threonyl-[protein] + ADP + H(+). Its activity is regulated as follows. Upon extracellular signal or mitogen stimulation, phosphorylated at Thr-577 in the C-terminal kinase domain (CTKD) by MAPK1/ERK2 and MAPK3/ERK1. The activated CTKD then autophosphorylates Ser-386, allowing binding of PDPK1, which in turn phosphorylates Ser-227 in the N-terminal kinase domain (NTDK) leading to the full activation of the protein and subsequent phosphorylation of the substrates by the NTKD. In terms of biological role, serine/threonine-protein kinase that acts downstream of ERK (MAPK1/ERK2 and MAPK3/ERK1) signaling and mediates mitogenic and stress-induced activation of the transcription factors CREB1, ETV1/ER81 and NR4A1/NUR77, regulates translation through RPS6 and EIF4B phosphorylation, and mediates cellular proliferation, survival, and differentiation by modulating mTOR signaling and repressing pro-apoptotic function of BAD and DAPK1. In fibroblast, is required for EGF-stimulated phosphorylation of CREB1 and histone H3 at 'Ser-10', which results in the subsequent transcriptional activation of several immediate-early genes. In response to mitogenic stimulation (EGF and PMA), phosphorylates and activates NR4A1/NUR77 and ETV1/ER81 transcription factors and the cofactor CREBBP. Upon insulin-derived signal, acts indirectly on the transcription regulation of several genes by phosphorylating GSK3B at 'Ser-9' and inhibiting its activity. Phosphorylates RPS6 in response to serum or EGF via an mTOR-independent mechanism and promotes translation initiation by facilitating assembly of the preinitiation complex. In response to insulin, phosphorylates EIF4B, enhancing EIF4B affinity for the EIF3 complex and stimulating cap-dependent translation. Is involved in the mTOR nutrient-sensing pathway by directly phosphorylating TSC2 at 'Ser-1798', which potently inhibits TSC2 ability to suppress mTOR signaling, and mediates phosphorylation of RPTOR, which regulates mTORC1 activity and may promote rapamycin-sensitive signaling independently of the PI3K/AKT pathway. Mediates cell survival by phosphorylating the pro-apoptotic proteins BAD and DAPK1 and suppressing their pro-apoptotic function. Promotes the survival of hepatic stellate cells by phosphorylating CEBPB in response to the hepatotoxin carbon tetrachloride (CCl4). Is involved in cell cycle regulation by phosphorylating the CDK inhibitor CDKN1B, which promotes CDKN1B association with 14-3-3 proteins and prevents its translocation to the nucleus and inhibition of G1 progression. In LPS-stimulated dendritic cells, is involved in TLR4-induced macropinocytosis, and in myeloma cells, acts as effector of FGFR3-mediated transformation signaling, after direct phosphorylation at Tyr-529 by FGFR3. Negatively regulates EGF-induced MAPK1/3 phosphorylation via phosphorylation of SOS1. Phosphorylates SOS1 at 'Ser-1134' and 'Ser-1161' that create YWHAB and YWHAE binding sites and which contribute to the negative regulation of MAPK1/3 phosphorylation. Phosphorylates EPHA2 at 'Ser-897', the RPS6KA-EPHA2 signaling pathway controls cell migration. Acts as a regulator of osteoblast differentiation by mediating phosphorylation of ATF4, thereby promoting ATF4 transactivation activity. The polypeptide is Ribosomal protein S6 kinase alpha-3 (RPS6KA3) (Homo sapiens (Human)).